Reading from the N-terminus, the 354-residue chain is UPF0421 protein BH2644 (354 aa).

Transmembrane regions (helical) follow at residues 22 to 42 (AVCL…FAVI), 60 to 80 (LIRL…AYFF), 107 to 127 (TLVA…HLFA), and 133 to 153 (VAGT…ILPP).

Belongs to the UPF0421 family.

The protein localises to the cell membrane. The polypeptide is UPF0421 protein BH2644 (Halalkalibacterium halodurans (strain ATCC BAA-125 / DSM 18197 / FERM 7344 / JCM 9153 / C-125) (Bacillus halodurans)).